The following is a 428-amino-acid chain: Enolase (428 aa).

Residue Gln163 participates in (2R)-2-phosphoglycerate binding. Glu205 serves as the catalytic Proton donor. The Mg(2+) site is built by Asp242, Glu286, and Asp313. (2R)-2-phosphoglycerate-binding residues include Lys338, Arg367, Ser368, and Lys389. The active-site Proton acceptor is Lys338.

The protein belongs to the enolase family. Requires Mg(2+) as cofactor.

It is found in the cytoplasm. Its subcellular location is the secreted. The protein localises to the cell surface. It carries out the reaction (2R)-2-phosphoglycerate = phosphoenolpyruvate + H2O. It functions in the pathway carbohydrate degradation; glycolysis; pyruvate from D-glyceraldehyde 3-phosphate: step 4/5. Its function is as follows. Catalyzes the reversible conversion of 2-phosphoglycerate (2-PG) into phosphoenolpyruvate (PEP). It is essential for the degradation of carbohydrates via glycolysis. The protein is Enolase of Bordetella petrii (strain ATCC BAA-461 / DSM 12804 / CCUG 43448).